Consider the following 181-residue polypeptide: Ubiquitin-conjugating enzyme E2 19 (181 aa).

Residues 1–10 (MATVNGYTGN) show a composition bias toward polar residues. The disordered stretch occupies residues 1-33 (MATVNGYTGNTPAATTPAATGSKQSAPPTKTVD). Residues 11 to 20 (TPAATTPAAT) are compositionally biased toward low complexity. The UBC core domain maps to 36-181 (SVLKRLQSEL…VEKLYKPLNA (146 aa)). Catalysis depends on Cys-120, which acts as the Glycyl thioester intermediate.

The protein belongs to the ubiquitin-conjugating enzyme family. As to quaternary structure, interacts with OR. Binds to LOT1. In terms of tissue distribution, expressed in all tissues with cell division activities and in mature leaves.

The protein resides in the cytoplasm. Its subcellular location is the nucleus. It catalyses the reaction S-ubiquitinyl-[E1 ubiquitin-activating enzyme]-L-cysteine + [E2 ubiquitin-conjugating enzyme]-L-cysteine = [E1 ubiquitin-activating enzyme]-L-cysteine + S-ubiquitinyl-[E2 ubiquitin-conjugating enzyme]-L-cysteine.. The protein operates within protein modification; protein ubiquitination. Its function is as follows. Accepts the ubiquitin from the E1 complex and catalyzes its covalent attachment to other proteins. Part of the anaphase-promoting complex (APC). May have a key function during cell cycle and be involved in cyclin B1 degradation. Triggers OR ubiquitination that mediates its subsequent nuclear localization. Involved in the repression of early light-induced proteins (ELIPs, e.g. ELIP1 and ELIP2) expression, probably via OR nuclear relocalization. The sequence is that of Ubiquitin-conjugating enzyme E2 19 from Arabidopsis thaliana (Mouse-ear cress).